The following is a 335-amino-acid chain: Oligopeptide transport ATP-binding protein OppD (335 aa).

The region spanning Leu18–Leu267 is the ABC transporter domain. Residue Gly54–Ser61 coordinates ATP.

It belongs to the ABC transporter superfamily. In terms of assembly, the complex is composed of two ATP-binding proteins (OppD and OppF), two transmembrane proteins (OppB and OppC) and a solute-binding protein (OppA).

It localises to the cell inner membrane. The catalysed reaction is a [peptide](out) + ATP + H2O = a [peptide](in) + ADP + phosphate + H(+). The enzyme catalyses L-alanyl-gamma-D-glutamyl-meso-2,6-diaminopimelate(out) + ATP + H2O = L-alanyl-gamma-D-glutamyl-meso-2,6-diaminopimelate(in) + ADP + phosphate + H(+). In terms of biological role, part of the ABC transporter complex OppABCDF involved in the uptake of oligopeptides, including the cell wall murein tripeptide L-alanyl-gamma-D-glutamyl-meso-diaminopimelate. Responsible for energy coupling to the transport system. Plays an important nutritional role and is involved in the recycling of cell wall peptides. Binds ATP. This is Oligopeptide transport ATP-binding protein OppD from Salmonella typhimurium (strain LT2 / SGSC1412 / ATCC 700720).